The chain runs to 302 residues: UDP-3-O-acyl-N-acetylglucosamine deacetylase (302 aa).

Histidine 78, histidine 237, and aspartate 241 together coordinate Zn(2+). Histidine 264 functions as the Proton donor in the catalytic mechanism.

It belongs to the LpxC family. The cofactor is Zn(2+).

The catalysed reaction is a UDP-3-O-[(3R)-3-hydroxyacyl]-N-acetyl-alpha-D-glucosamine + H2O = a UDP-3-O-[(3R)-3-hydroxyacyl]-alpha-D-glucosamine + acetate. The protein operates within glycolipid biosynthesis; lipid IV(A) biosynthesis; lipid IV(A) from (3R)-3-hydroxytetradecanoyl-[acyl-carrier-protein] and UDP-N-acetyl-alpha-D-glucosamine: step 2/6. Catalyzes the hydrolysis of UDP-3-O-myristoyl-N-acetylglucosamine to form UDP-3-O-myristoylglucosamine and acetate, the committed step in lipid A biosynthesis. The polypeptide is UDP-3-O-acyl-N-acetylglucosamine deacetylase (Hahella chejuensis (strain KCTC 2396)).